A 528-amino-acid polypeptide reads, in one-letter code: Probable cyclic di-GMP phosphodiesterase PdeC (528 aa).

The next 2 helical transmembrane spans lie at 14 to 34 (GIIF…FLWA) and 242 to 262 (HLIF…LLWL). One can recognise an EAL domain in the interval 268 to 520 (YLSPKRKLQR…VFMQWMEQLP (253 aa)).

The protein localises to the cell inner membrane. The catalysed reaction is 3',3'-c-di-GMP + H2O = 5'-phosphoguanylyl(3'-&gt;5')guanosine + H(+). Functionally, phosphodiesterase (PDE) that catalyzes the hydrolysis of cyclic-di-GMP (c-di-GMP) to 5'-pGpG. Cyclic-di-GMP is a second messenger which controls cell surface-associated traits in bacteria. Overexpression reduces biofilm formation. This Escherichia coli (strain K12) protein is Probable cyclic di-GMP phosphodiesterase PdeC.